Here is a 569-residue protein sequence, read N- to C-terminus: Arginine--tRNA ligase (569 aa).

The 'HIGH' region signature appears at 123 to 133 (ANPNGPLHVGH).

Belongs to the class-I aminoacyl-tRNA synthetase family.

The protein resides in the cytoplasm. It carries out the reaction tRNA(Arg) + L-arginine + ATP = L-arginyl-tRNA(Arg) + AMP + diphosphate. The polypeptide is Arginine--tRNA ligase (Methanosarcina mazei (strain ATCC BAA-159 / DSM 3647 / Goe1 / Go1 / JCM 11833 / OCM 88) (Methanosarcina frisia)).